The primary structure comprises 332 residues: Nicotianamine synthase 1 (332 aa).

It belongs to the nicotianamine synthase (NAS)-like family. As to expression, expressed in roots.

It catalyses the reaction 3 S-adenosyl-L-methionine = nicotianamine + 3 S-methyl-5'-thioadenosine + 3 H(+). Its function is as follows. Synthesizes nicotianamine, a polyamine that is the first intermediate in the synthesis of the phytosiderophores of the mugineic acid type found in gramineae which serve as a sensor for the physiological iron status within the plant, and/or might be involved in the transport of iron. The chain is Nicotianamine synthase 1 (NAS1) from Oryza sativa subsp. indica (Rice).